Reading from the N-terminus, the 284-residue chain is L-ribulose-5-phosphate 3-epimerase UlaE (284 aa).

It belongs to the L-ribulose-5-phosphate 3-epimerase family.

The enzyme catalyses L-ribulose 5-phosphate = L-xylulose 5-phosphate. It participates in cofactor degradation; L-ascorbate degradation; D-xylulose 5-phosphate from L-ascorbate: step 3/4. Catalyzes the isomerization of L-xylulose-5-phosphate to L-ribulose-5-phosphate. Is involved in the anaerobic L-ascorbate utilization. The polypeptide is L-ribulose-5-phosphate 3-epimerase UlaE (Escherichia coli (strain K12 / MC4100 / BW2952)).